The primary structure comprises 213 residues: 3,4-dihydroxy-2-butanone 4-phosphate synthase (213 aa).

Residues 37 to 38, Asp-42, 150 to 154, and Glu-174 each bind D-ribulose 5-phosphate; these read RE and RAGHT. Glu-38 provides a ligand contact to Mg(2+). Mg(2+) is bound at residue His-153.

Belongs to the DHBP synthase family. Homodimer. The cofactor is Mg(2+). It depends on Mn(2+) as a cofactor.

It catalyses the reaction D-ribulose 5-phosphate = (2S)-2-hydroxy-3-oxobutyl phosphate + formate + H(+). Its pathway is cofactor biosynthesis; riboflavin biosynthesis; 2-hydroxy-3-oxobutyl phosphate from D-ribulose 5-phosphate: step 1/1. Catalyzes the conversion of D-ribulose 5-phosphate to formate and 3,4-dihydroxy-2-butanone 4-phosphate. The protein is 3,4-dihydroxy-2-butanone 4-phosphate synthase of Buchnera aphidicola subsp. Schizaphis graminum (strain Sg).